We begin with the raw amino-acid sequence, 156 residues long: Oxidized purine nucleoside triphosphate hydrolase (156 aa).

Positions 3–132 constitute a Nudix hydrolase domain; sequence ASRLYTLVLV…WFPLLLQKKK (130 aa). Thr-8 provides a ligand contact to 2-oxo-dATP. 8-oxo-dGMP contacts are provided by Thr-8 and Lys-23. The 8-oxo-dGTP site is built by Thr-8 and Lys-23. 2 residues coordinate N(6)-methyl-AMP: Thr-8 and Lys-23. Thr-8 and Lys-23 together coordinate O(6)-methyl-dGMP. An 8-oxo-ATP-binding site is contributed by Phe-27. Residues Asn-33 and 35 to 38 contribute to the 2-oxo-dATP site; that span reads FGGK. Position 33 (Asn-33) interacts with 8-oxo-dGMP. 8-oxo-dGTP contacts are provided by residues Asn-33 and 35–38; that span reads FGGK. Asn-33 provides a ligand contact to O(6)-methyl-dGMP. 8-oxo-ATP-binding positions include 35–38 and Glu-52; that span reads FGGK. Gly-36, Glu-52, Glu-55, Glu-56, and Glu-100 together coordinate Mg(2+). Residues 37-58 carry the Nudix box motif; sequence GKVQEGETIEDGARRELQEESG. Residue Glu-56 participates in 8-oxo-ATP binding. 117–120 is a 2-oxo-dATP binding site; sequence WPDD. An 8-oxo-dGMP-binding site is contributed by 117 to 120; it reads WPDD. 117-120 is an 8-oxo-dGTP binding site; the sequence is WPDD. 117–120 provides a ligand contact to N(6)-methyl-AMP; sequence WPDD. 117–120 serves as a coordination point for O(6)-methyl-dGMP; that stretch reads WPDD. Residue 117 to 120 participates in 8-oxo-ATP binding; sequence WPDD.

This sequence belongs to the Nudix hydrolase family. In terms of assembly, monomer. Requires Mg(2+) as cofactor. The N-terminus is blocked. In terms of tissue distribution, widely expressed with highest expression in thymus, testis, embryo and proliferating blood lymphocytes.

It localises to the cytoplasm. Its subcellular location is the cytosol. The protein resides in the mitochondrion matrix. The protein localises to the nucleus. The catalysed reaction is 2-oxo-dATP + H2O = 2-oxo-dAMP + diphosphate + H(+). It catalyses the reaction 2-oxo-ATP + H2O = 2-oxo-AMP + diphosphate + H(+). It carries out the reaction 8-oxo-dGTP + H2O = 8-oxo-dGMP + diphosphate + H(+). The enzyme catalyses 8-oxo-dATP + H2O = 8-oxo-dAMP + diphosphate + H(+). The catalysed reaction is O(6)-methyl-dGTP + H2O = O(6)-methyl-dGMP + diphosphate + H(+). It catalyses the reaction N(6)-methyl-dATP + H2O = N(6)-methyl-dAMP + diphosphate + H(+). It carries out the reaction N(6)-methyl-ATP + H2O = N(6)-methyl-AMP + diphosphate + H(+). With respect to regulation, inhibited by 2-oxo-dADP and 8-oxo-dGDP. Oxidized purine nucleoside triphosphate hydrolase which is a prominent sanitizer of the oxidized nucleotide pool. Catalyzes the hydrolysis of 2-oxo-dATP (2-hydroxy-dATP) into 2-oxo-dAMP. Also has a significant hydrolase activity toward 2-oxo-ATP, 8-oxo-dGTP and 8-oxo-dATP. Through the hydrolysis of oxidized purine nucleoside triphosphates, prevents their incorporation into DNA and the subsequent transversions A:T to C:G and G:C to T:A. Also catalyzes the hydrolysis of methylated purine nucleoside triphosphate preventing their integration into DNA. Through this antimutagenic activity protects cells from oxidative stress. The chain is Oxidized purine nucleoside triphosphate hydrolase (NUDT1) from Homo sapiens (Human).